A 177-amino-acid polypeptide reads, in one-letter code: ATP synthase subunit delta (177 aa).

It belongs to the ATPase delta chain family. F-type ATPases have 2 components, F(1) - the catalytic core - and F(0) - the membrane proton channel. F(1) has five subunits: alpha(3), beta(3), gamma(1), delta(1), epsilon(1). F(0) has three main subunits: a(1), b(2) and c(10-14). The alpha and beta chains form an alternating ring which encloses part of the gamma chain. F(1) is attached to F(0) by a central stalk formed by the gamma and epsilon chains, while a peripheral stalk is formed by the delta and b chains.

It is found in the cell membrane. Its function is as follows. F(1)F(0) ATP synthase produces ATP from ADP in the presence of a proton or sodium gradient. F-type ATPases consist of two structural domains, F(1) containing the extramembraneous catalytic core and F(0) containing the membrane proton channel, linked together by a central stalk and a peripheral stalk. During catalysis, ATP synthesis in the catalytic domain of F(1) is coupled via a rotary mechanism of the central stalk subunits to proton translocation. Functionally, this protein is part of the stalk that links CF(0) to CF(1). It either transmits conformational changes from CF(0) to CF(1) or is implicated in proton conduction. This is ATP synthase subunit delta from Carboxydothermus hydrogenoformans (strain ATCC BAA-161 / DSM 6008 / Z-2901).